A 426-amino-acid chain; its full sequence is Adenylosuccinate synthetase (426 aa).

GTP is bound by residues 14–20 (GDEGKGK) and 42–44 (GHT). Aspartate 15 serves as the catalytic Proton acceptor. Mg(2+) is bound by residues aspartate 15 and glycine 42. IMP is bound by residues 15 to 18 (DEGK), 40 to 43 (NAGH), threonine 130, arginine 144, glutamine 224, threonine 239, and arginine 303. Residue histidine 43 is the Proton donor of the active site. 299–305 (TVTKRPR) contributes to the substrate binding site. GTP-binding positions include arginine 305, 331–333 (LID), and 413–415 (SVG).

Belongs to the adenylosuccinate synthetase family. As to quaternary structure, homodimer. Mg(2+) serves as cofactor.

Its subcellular location is the cytoplasm. It carries out the reaction IMP + L-aspartate + GTP = N(6)-(1,2-dicarboxyethyl)-AMP + GDP + phosphate + 2 H(+). It functions in the pathway purine metabolism; AMP biosynthesis via de novo pathway; AMP from IMP: step 1/2. In terms of biological role, plays an important role in the de novo pathway of purine nucleotide biosynthesis. Catalyzes the first committed step in the biosynthesis of AMP from IMP. This Malacoplasma penetrans (strain HF-2) (Mycoplasma penetrans) protein is Adenylosuccinate synthetase.